The following is a 417-amino-acid chain: Gamma-glutamyl phosphate reductase (417 aa).

It belongs to the gamma-glutamyl phosphate reductase family.

It localises to the cytoplasm. The enzyme catalyses L-glutamate 5-semialdehyde + phosphate + NADP(+) = L-glutamyl 5-phosphate + NADPH + H(+). It participates in amino-acid biosynthesis; L-proline biosynthesis; L-glutamate 5-semialdehyde from L-glutamate: step 2/2. Catalyzes the NADPH-dependent reduction of L-glutamate 5-phosphate into L-glutamate 5-semialdehyde and phosphate. The product spontaneously undergoes cyclization to form 1-pyrroline-5-carboxylate. The sequence is that of Gamma-glutamyl phosphate reductase from Serratia marcescens.